The primary structure comprises 1612 residues: Replicase large subunit (1612 aa).

Residues 50–452 form a methyltransferase region; that stretch reads FSKVISQEQI…DKSVLQALSM (403 aa). Residues 72–280 enclose the Alphavirus-like MT domain; the sequence is TFYNTQLAVH…HSYKNVIKYV (209 aa). The region spanning 794-953 is the (+)RNA virus helicase ATP-binding domain; the sequence is PIYSDMGKLQ…YTCLYHREVR (160 aa). The segment at 822–1080 is helicase; sequence TLVDGVPGCG…TRHTKSFKYY (259 aa). 826-833 serves as a coordination point for ATP; the sequence is GVPGCGKT. Residues 954 to 1112 enclose the (+)RNA virus helicase C-terminal domain; it reads RLSLRCPADV…DMYKVDAGIL (159 aa). Residues 1374 to 1487 form the RdRp catalytic domain; the sequence is MEVLELDISK…YIPKGLDLPD (114 aa).

It belongs to the ssRNA positive-strand viruses RNA-directed RNA polymerase family. In terms of assembly, heterodimer of a large and a small subunit.

The enzyme catalyses RNA(n) + a ribonucleoside 5'-triphosphate = RNA(n+1) + diphosphate. It carries out the reaction ATP + H2O = ADP + phosphate + H(+). In terms of biological role, is an RNA-dependent RNA polymerase active in viral RNA replication. Functionally, is a methyltransferase active in RNA capping and an RNA helicase. Methyltransferase displays a cytoplasmic capping enzyme activity. This function is necessary since all viral RNAs are synthesized in the cytoplasm, and host capping enzymes are restricted to the nucleus. Helicase region probably exhibits NTPase and RNA unwinding activities (Potential). It also acts as a suppressor of RNA-mediated gene silencing, also known as post-transcriptional gene silencing (PTGS), a mechanism of plant viral defense that limits the accumulation of viral RNAs. May mediate silencing suppression through either inhibition of HEN1-mediated siRNA or siRNA demethylation. The chain is Replicase large subunit from Cymbidium (ORSV).